The following is a 398-amino-acid chain: Aspartic protease 3 (398 aa).

Positions Met-1–Ala-17 are cleaved as a signal peptide. The propeptide at Ile-18–Asp-55 is removed in mature form. The region spanning Tyr-69–Ala-392 is the Peptidase A1 domain. The active site involves Asp-87. Residues Cys-100 and Cys-107 are joined by a disulfide bond. Asp-279 is a catalytic residue. Residues Cys-313 and Cys-351 are joined by a disulfide bond. N-linked (GlcNAc...) asparagine glycosylation occurs at Asn-321.

Belongs to the peptidase A1 family. As to expression, highly expressed in intestine and to a lower extent in body wall muscles, hypodermis and neurons.

Its subcellular location is the cytoplasm. It localises to the lysosome. The protein localises to the secreted. In terms of biological role, aspartic protease. Part of the necrosis cell death pathway. Involved in neuronal cell degeneration. Involved in heat stress response. This chain is Aspartic protease 3, found in Caenorhabditis elegans.